The sequence spans 91 residues: Small ribosomal subunit protein uS15 (91 aa).

The protein belongs to the universal ribosomal protein uS15 family. As to quaternary structure, part of the 30S ribosomal subunit. Forms a bridge to the 50S subunit in the 70S ribosome, contacting the 23S rRNA.

Its function is as follows. One of the primary rRNA binding proteins, it binds directly to 16S rRNA where it helps nucleate assembly of the platform of the 30S subunit by binding and bridging several RNA helices of the 16S rRNA. Functionally, forms an intersubunit bridge (bridge B4) with the 23S rRNA of the 50S subunit in the ribosome. The protein is Small ribosomal subunit protein uS15 of Cytophaga hutchinsonii (strain ATCC 33406 / DSM 1761 / CIP 103989 / NBRC 15051 / NCIMB 9469 / D465).